Reading from the N-terminus, the 1256-residue chain is Nephrin (1256 aa).

An N-terminal signal peptide occupies residues 1-35 (MGAKEATVRGPGASPVHRTCHLIPLLLAGMLTTGL). Residues 36–1078 (AQSPVPTSAP…PGPPRLPLLP (1043 aa)) are Extracellular-facing. 6 Ig-like C2-type domains span residues 39–144 (PVPT…VILS), 149–247 (PKVL…ASFT), 256–347 (PPVI…RSIT), 354–448 (PSAV…KSLT), 454–554 (PAQK…TQLV), and 558–649 (PPTN…ETVS). Residue Asn-54 is glycosylated (N-linked (GlcNAc...) asparagine). 3 cysteine pairs are disulfide-bonded: Cys-67-Cys-125, Cys-174-Cys-231, and Cys-279-Cys-331. N-linked (GlcNAc...) asparagine glycosylation is found at Asn-370 and Asn-415. A disulfide bridge connects residues Cys-375 and Cys-431. Residue Ser-446 is modified to Phosphoserine. Cys-479 and Cys-542 are joined by a disulfide. Residues 491 to 516 (TWLKDSRPVNDPRQSQEPRRVQLGSV) are disordered. The span at 494–510 (KDSRPVNDPRQSQEPRR) shows a compositional bias: basic and acidic residues. N-linked (GlcNAc...) asparagine glycosylation is found at Asn-561, Asn-578, Asn-591, and Asn-722. The cysteines at positions 581 and 637 are disulfide-linked. Ig-like C2-type domains follow at residues 754-846 (PTIR…LVRL) and 852-953 (PQVD…VSIS). 2 disulfides stabilise this stretch: Cys-775/Cys-830 and Cys-877/Cys-934. The Fibronectin type-III domain occupies 957 to 1051 (PPLGLKVVSV…GIQVSITTPG (95 aa)). Residues 1048–1071 (TTPGLDQAPEDTDQPLPTEQPPGP) are disordered. The helical transmembrane segment at 1079 to 1099 (VLFAVGGLLLLSNASCVGGLL) threads the bilayer. The Cytoplasmic portion of the chain corresponds to 1100 to 1256 (WRRRLRRLAE…LPFELRGHLV (157 aa)). The residue at position 1112 (Ser-1112) is a Phosphoserine. A compositionally biased stretch (basic and acidic residues) spans 1112–1128 (SEKTEAGSEEDRIRNEY). The disordered stretch occupies residues 1112-1143 (SEKTEAGSEEDRIRNEYEESQWTGDRDTRSST). Phosphothreonine is present on Thr-1115. Ser-1119 is subject to Phosphoserine. Residue Tyr-1208 is modified to Phosphotyrosine; by FYN.

The protein belongs to the immunoglobulin superfamily. In terms of assembly, interacts with NPHS2 and with CD2AP (via C-terminal domain). Interacts with MAGI1 (via PDZ 2 and 3 domains) forming a tripartite complex with IGSF5/JAM4. Forms a complex with ACTN4, CASK, IQGAP1, MAGI2, SPTAN1 and SPTBN1. Interacts with DDN; the interaction is direct. Self-associates (via the Ig-like domains). Also interacts (via the Ig-like domains) with KIRREL1 and KIRREL2; the interaction with KIRREL1 is dependent on KIRREL1 glycosylation. Interacts with KIRREL3. Interacts with phosphatidylinositol 3-kinase regulatory subunit PIK3R1; the interaction is reduced by high glucose levels. In terms of processing, phosphorylated at Tyr-1208 by FYN, leading to the recruitment and activation of phospholipase C-gamma-1/PLCG1. Tyrosine phosphorylation is reduced by high glucose levels. Dephosphorylated by tensin TNS2 which leads to reduced binding of NPHN1 to PIK3R1. As to expression, expressed in kidney glomeruli. In the embryo, expressed in the mesonephric kidney at 11 dpc with strong expression in cranial tubules with podocyte-like structures. Expression is observed in the podocytes of the developing kidney from 13 dpc. High expression is also detected in the developing cerebellum, hindbrain, spinal cord, retina and hypothalamus. Expressed in skeletal muscle during myoblast fusion such as in the adult following acute injury and in the embryo but not detected in uninjured adult skeletal muscle. Isoform 1 and isoform 2 are expressed in the newborn brain and developing cerebellum. Isoform 1 is the predominant isoform in adult kidney.

The protein resides in the cell membrane. In terms of biological role, seems to play a role in the development or function of the kidney glomerular filtration barrier. Regulates glomerular vascular permeability. May anchor the podocyte slit diaphragm to the actin cytoskeleton. Plays a role in skeletal muscle formation through regulation of myoblast fusion. This Mus musculus (Mouse) protein is Nephrin (Nphs1).